Here is a 455-residue protein sequence, read N- to C-terminus: UPF0210 protein Teth514_2074 (455 aa).

Belongs to the UPF0210 family. In terms of assembly, homodimer.

The polypeptide is UPF0210 protein Teth514_2074 (Thermoanaerobacter sp. (strain X514)).